Reading from the N-terminus, the 371-residue chain is Dual-specificity RNA methyltransferase RlmN (371 aa).

E99 functions as the Proton acceptor in the catalytic mechanism. The region spanning 106–333 is the Radical SAM core domain; it reads DDNRATLCIS…AIRRASKGQD (228 aa). C113 and C338 are disulfide-bonded. [4Fe-4S] cluster contacts are provided by C120, C124, and C127. Residues 165–166, S197, 219–221, and N295 each bind S-adenosyl-L-methionine; these read GE and SLN. The active-site S-methylcysteine intermediate is C338. The segment at 345–371 is disordered; that stretch reads LTVSPPAQESERNSARPDRSQGKGKHL. The span at 353 to 365 shows a compositional bias: basic and acidic residues; it reads ESERNSARPDRSQ.

It belongs to the radical SAM superfamily. RlmN family. [4Fe-4S] cluster is required as a cofactor.

Its subcellular location is the cytoplasm. It carries out the reaction adenosine(2503) in 23S rRNA + 2 reduced [2Fe-2S]-[ferredoxin] + 2 S-adenosyl-L-methionine = 2-methyladenosine(2503) in 23S rRNA + 5'-deoxyadenosine + L-methionine + 2 oxidized [2Fe-2S]-[ferredoxin] + S-adenosyl-L-homocysteine. The catalysed reaction is adenosine(37) in tRNA + 2 reduced [2Fe-2S]-[ferredoxin] + 2 S-adenosyl-L-methionine = 2-methyladenosine(37) in tRNA + 5'-deoxyadenosine + L-methionine + 2 oxidized [2Fe-2S]-[ferredoxin] + S-adenosyl-L-homocysteine. Its function is as follows. Specifically methylates position 2 of adenine 2503 in 23S rRNA and position 2 of adenine 37 in tRNAs. m2A2503 modification seems to play a crucial role in the proofreading step occurring at the peptidyl transferase center and thus would serve to optimize ribosomal fidelity. The chain is Dual-specificity RNA methyltransferase RlmN from Syntrophotalea carbinolica (strain DSM 2380 / NBRC 103641 / GraBd1) (Pelobacter carbinolicus).